The following is a 279-amino-acid chain: Movement protein (279 aa).

Positions 255 to 279 are disordered; the sequence is SPPFAIGSPSASRNNSFRSQVVNGL. Residues 263 to 279 show a composition bias toward polar residues; it reads PSASRNNSFRSQVVNGL.

The protein belongs to the cucumovirus movement protein family.

The protein localises to the host cell junction. Its subcellular location is the host plasmodesma. Its function is as follows. Transports viral genome to neighboring plant cells directly through plasmosdesmata, without any budding. The movement protein allows efficient cell to cell propagation, by bypassing the host cell wall barrier. Acts by forming a tubular structure at the host plasmodesmata, enlarging it enough to allow free passage of virion capsids. This is Movement protein from Cucumis sativus (Cucumber).